We begin with the raw amino-acid sequence, 199 residues long: Twist-related protein 1 (199 aa).

A compositionally biased stretch (low complexity) spans 1–18 (MMQDVSSSPVSPADDSLS). Residues 1 to 102 (MMQDVSSSPV…GGGSPQSYEE (102 aa)) form a disordered region. The segment covering 34–43 (RGGRKRRSSR) has biased composition (basic residues). Composition is skewed to gly residues over residues 46-65 (AGGGAGPGGAAGGGVGGGDE) and 80-96 (GCGGGAGGGGSSSGGGS). The 52-residue stretch at 105–156 (TQRVMANVRERQRTQSLNEAFAALRKIIPTLPSDKLSKIQTLKLAARYIDFL) folds into the bHLH domain. Residues 158–188 (QVLQSDELDSKMASCSYVAHERLSYAFSVWR) form a sufficient for transactivation activity region.

Efficient DNA binding requires dimerization with another bHLH protein. Homodimer or heterodimer with E proteins such as TCF3. ID1 binds preferentially to TCF3 but does not interact efficiently with TWIST1 so ID1 levels control the amount of TCF3 available to dimerize with TWIST and thus determine the type of dimer formed.

It localises to the nucleus. In terms of biological role, acts as a transcriptional regulator. Inhibits myogenesis by sequestrating E proteins, inhibiting trans-activation by MEF2, and inhibiting DNA-binding by MYOD1 through physical interaction. This interaction probably involves the basic domains of both proteins. Also represses expression of pro-inflammatory cytokines such as TNFA and IL1B. Regulates cranial suture patterning and fusion. Activates transcription as a heterodimer with E proteins. Regulates gene expression differentially, depending on dimer composition. Homodimers induce expression of FGFR2 and POSTN while heterodimers repress FGFR2 and POSTN expression and induce THBS1 expression. Heterodimerization is also required for osteoblast differentiation. Represses the activity of the circadian transcriptional activator: NPAS2-BMAL1 heterodimer. The polypeptide is Twist-related protein 1 (TWIST1) (Microcebus murinus (Gray mouse lemur)).